Reading from the N-terminus, the 234-residue chain is Large ribosomal subunit protein uL1 (234 aa).

The protein belongs to the universal ribosomal protein uL1 family. Part of the 50S ribosomal subunit.

Binds directly to 23S rRNA. The L1 stalk is quite mobile in the ribosome, and is involved in E site tRNA release. Its function is as follows. Protein L1 is also a translational repressor protein, it controls the translation of the L11 operon by binding to its mRNA. The chain is Large ribosomal subunit protein uL1 from Pectobacterium atrosepticum (strain SCRI 1043 / ATCC BAA-672) (Erwinia carotovora subsp. atroseptica).